The primary structure comprises 509 residues: Histidine--tRNA ligase, cytoplasmic (509 aa).

The residue at position 2 (Ala2) is an N-acetylalanine. One can recognise a WHEP-TRS domain in the interval Asp3 to Pro59. A Phosphoserine modification is found at Ser66. L-histidine is bound by residues Asp130 to Thr132, Arg157, Gln173, Asp177, Arg326, and Tyr330 to Tyr331. Ser356 carries the phosphoserine modification.

Belongs to the class-II aminoacyl-tRNA synthetase family. In terms of assembly, homodimer.

The protein resides in the cytoplasm. The catalysed reaction is tRNA(His) + L-histidine + ATP = L-histidyl-tRNA(His) + AMP + diphosphate + H(+). Functionally, catalyzes the ATP-dependent ligation of histidine to the 3'-end of its cognate tRNA, via the formation of an aminoacyl-adenylate intermediate (His-AMP). Plays a role in axon guidance. This chain is Histidine--tRNA ligase, cytoplasmic (Hars1), found in Mus musculus (Mouse).